The sequence spans 100 residues: NADH-quinone oxidoreductase subunit K (100 aa).

3 helical membrane-spanning segments follow: residues 3–23 (PTSYYILLSALLFTLGVVGVI), 29–49 (LVLFMSVELMLNSANLALVTF), and 60–80 (IVVFFVIVVAAAEVAVGLALL).

Belongs to the complex I subunit 4L family. As to quaternary structure, NDH-1 is composed of 14 different subunits. Subunits NuoA, H, J, K, L, M, N constitute the membrane sector of the complex.

The protein localises to the cell membrane. It carries out the reaction a quinone + NADH + 5 H(+)(in) = a quinol + NAD(+) + 4 H(+)(out). In terms of biological role, NDH-1 shuttles electrons from NADH, via FMN and iron-sulfur (Fe-S) centers, to quinones in the respiratory chain. The immediate electron acceptor for the enzyme in this species is believed to be ubiquinone. Couples the redox reaction to proton translocation (for every two electrons transferred, four hydrogen ions are translocated across the cytoplasmic membrane), and thus conserves the redox energy in a proton gradient. The sequence is that of NADH-quinone oxidoreductase subunit K from Roseiflexus castenholzii (strain DSM 13941 / HLO8).